Reading from the N-terminus, the 445-residue chain is Cytoplasmic tRNA 2-thiolation protein 2 (445 aa).

Positions Met1–Asp11 are enriched in acidic residues. The segment at Met1–Glu26 is disordered. Basic and acidic residues predominate over residues Gly13 to Ser22.

Belongs to the CTU2/NCS2 family.

Its subcellular location is the cytoplasm. The protein operates within tRNA modification; 5-methoxycarbonylmethyl-2-thiouridine-tRNA biosynthesis. Functionally, plays a central role in 2-thiolation of mcm(5)S(2)U at tRNA wobble positions of tRNA(Lys), tRNA(Glu) and tRNA(Gln). May act by forming a heterodimer with NCS6/CTU1 that ligates sulfur from thiocarboxylated URM1 onto the uridine of tRNAs at wobble position. This Aedes aegypti (Yellowfever mosquito) protein is Cytoplasmic tRNA 2-thiolation protein 2.